A 464-amino-acid polypeptide reads, in one-letter code: Glucan 1,3-beta-glucosidase 3 (464 aa).

The protein belongs to the glycosyl hydrolase 5 (cellulase A) family.

The catalysed reaction is Successive hydrolysis of beta-D-glucose units from the non-reducing ends of (1-&gt;3)-beta-D-glucans, releasing alpha-glucose.. This is Glucan 1,3-beta-glucosidase 3 (exg3) from Schizosaccharomyces pombe (strain 972 / ATCC 24843) (Fission yeast).